The primary structure comprises 304 residues: uncharacterized protein (304 aa).

Residues 226-244 show a composition bias toward polar residues; the sequence is SRNSESSRQSNLNSPNDSV. The segment at 226-263 is disordered; that stretch reads SRNSESSRQSNLNSPNDSVKFNEFNKSNKSTKTNPNNI. Positions 246 to 262 are enriched in low complexity; sequence FNEFNKSNKSTKTNPNN.

This is an uncharacterized protein from Acanthamoeba polyphaga (Amoeba).